Reading from the N-terminus, the 394-residue chain is Chorismate synthase (394 aa).

The NADP(+) site is built by arginine 40 and arginine 46. FMN-binding positions include 135 to 137 (RAS), 255 to 256 (QA), glycine 302, 317 to 321 (KPISS), and arginine 343.

It belongs to the chorismate synthase family. In terms of assembly, homotetramer. It depends on FMNH2 as a cofactor.

It catalyses the reaction 5-O-(1-carboxyvinyl)-3-phosphoshikimate = chorismate + phosphate. The protein operates within metabolic intermediate biosynthesis; chorismate biosynthesis; chorismate from D-erythrose 4-phosphate and phosphoenolpyruvate: step 7/7. Its function is as follows. Catalyzes the anti-1,4-elimination of the C-3 phosphate and the C-6 proR hydrogen from 5-enolpyruvylshikimate-3-phosphate (EPSP) to yield chorismate, which is the branch point compound that serves as the starting substrate for the three terminal pathways of aromatic amino acid biosynthesis. This reaction introduces a second double bond into the aromatic ring system. The protein is Chorismate synthase of Parafrankia sp. (strain EAN1pec).